We begin with the raw amino-acid sequence, 1516 residues long: Myosin-52 (1516 aa).

Residues 7–62 (YKGLQCWIPDEQSQWIPGSIKDCRVEGEKAFLTVQDENENETVITVKPDDLNYEGR) enclose the Myosin N-terminal SH3-like domain. The Myosin motor domain maps to 73–766 (SDADDLTDLS…VTPLLESARD (694 aa)). 167 to 174 (GESGAGKT) is a binding site for ATP. An actin-binding region spans residues 647 to 669 (LVSLMSTINETNAHYIRCIKPNE). 5 consecutive IQ domains span residues 793-813 (RKRV…RHTE), 818-838 (SSNI…KEFI), 840-865 (TKNS…EKTK), 866-886 (HDAT…KHYK), and 888-917 (LQYY…ESTK). A coiled-coil region spans residues 926–1034 (YRLESRLFEI…LKSQLKNYDM (109 aa)). Phosphoserine is present on residues serine 1065 and serine 1072. The region spanning 1163–1431 (ERYCVHTLEY…SELSKNIVAE (269 aa)) is the Dilute domain.

This sequence belongs to the TRAFAC class myosin-kinesin ATPase superfamily. Myosin family.

Its subcellular location is the cytoplasm. Its function is as follows. Involved in cell wall deposition where it has a role in the localization of mok1. In Schizosaccharomyces pombe (strain 972 / ATCC 24843) (Fission yeast), this protein is Myosin-52 (myo52).